A 450-amino-acid polypeptide reads, in one-letter code: Deoxyguanosinetriphosphate triphosphohydrolase-like protein (450 aa).

One can recognise an HD domain in the interval 61–201; sequence RLTHSLEVAQ…AKLAPELNAD (141 aa).

The protein belongs to the dGTPase family. Type 2 subfamily.

The protein is Deoxyguanosinetriphosphate triphosphohydrolase-like protein of Pasteurella multocida (strain Pm70).